Reading from the N-terminus, the 155-residue chain is S-ribosylhomocysteine lyase (155 aa).

Fe cation is bound by residues His54, His58, and Cys122.

Belongs to the LuxS family. As to quaternary structure, homodimer. Fe cation serves as cofactor.

It catalyses the reaction S-(5-deoxy-D-ribos-5-yl)-L-homocysteine = (S)-4,5-dihydroxypentane-2,3-dione + L-homocysteine. Involved in the synthesis of autoinducer 2 (AI-2) which is secreted by bacteria and is used to communicate both the cell density and the metabolic potential of the environment. The regulation of gene expression in response to changes in cell density is called quorum sensing. Catalyzes the transformation of S-ribosylhomocysteine (RHC) to homocysteine (HC) and 4,5-dihydroxy-2,3-pentadione (DPD). The protein is S-ribosylhomocysteine lyase of Deinococcus geothermalis (strain DSM 11300 / CIP 105573 / AG-3a).